A 107-amino-acid polypeptide reads, in one-letter code: Virulence factor PGA16 (107 aa).

Positions 1-18 (MRVFQIVYILIISNLIYA) are cleaved as a signal peptide. Residues 26–56 (SHHHKNDNNIADNTNNNNNNNNNNNNNNITN) form a disordered region. The span at 33–56 (NNIADNTNNNNNNNNNNNNNNITN) shows a compositional bias: low complexity. N-linked (GlcNAc...) asparagine glycosylation is found at asparagine 53 and asparagine 56. Residue glycine 76 is the site of GPI-anchor amidated glycine attachment. Positions 77–107 (VAAMGGILGQNGWFYGDAGLMAAIFGAMLLL) are cleaved as a propeptide — removed in mature form.

The protein localises to the cell membrane. Cell surface GPI-anchored protein required for virulence. Mediates hyphal ramification which is important for the interaction with host cells. This chain is Virulence factor PGA16 (PGA16), found in Candida albicans (strain SC5314 / ATCC MYA-2876) (Yeast).